Consider the following 81-residue polypeptide: Sulfur carrier protein TusA (81 aa).

Cys-19 functions as the Cysteine persulfide intermediate in the catalytic mechanism.

Belongs to the sulfur carrier protein TusA family.

It localises to the cytoplasm. Sulfur carrier protein which probably makes part of a sulfur-relay system. In Shewanella denitrificans (strain OS217 / ATCC BAA-1090 / DSM 15013), this protein is Sulfur carrier protein TusA.